Reading from the N-terminus, the 434-residue chain is Trigger factor (434 aa).

Residues 162 to 247 form the PPIase FKBP-type domain; the sequence is GDKINISLIA…FNTVEQAKLP (86 aa).

Belongs to the FKBP-type PPIase family. Tig subfamily.

It is found in the cytoplasm. The enzyme catalyses [protein]-peptidylproline (omega=180) = [protein]-peptidylproline (omega=0). In terms of biological role, involved in protein export. Acts as a chaperone by maintaining the newly synthesized protein in an open conformation. Functions as a peptidyl-prolyl cis-trans isomerase. The chain is Trigger factor from Methylobacillus flagellatus (strain ATCC 51484 / DSM 6875 / VKM B-1610 / KT).